The sequence spans 511 residues: Apolipoprotein N-acyltransferase (511 aa).

6 consecutive transmembrane segments (helical) span residues 7–29 (PGWP…LAPF), 58–78 (GWWY…VSIH), 90–110 (LLML…AWLW), 125–145 (LAFA…LTGF), 163–183 (VPVG…ALLV), and 192–212 (GASL…GLYL). In terms of domain architecture, CN hydrolase spans 230-470 (IQGNIAQELK…QGILRGEVIP (241 aa)). Catalysis depends on E269, which acts as the Proton acceptor. K330 is an active-site residue. Residue C382 is the Nucleophile of the active site. A helical membrane pass occupies residues 482 to 502 (VWPLAGLAGVLLLWALLGRQL).

It belongs to the CN hydrolase family. Apolipoprotein N-acyltransferase subfamily.

The protein resides in the cell inner membrane. The enzyme catalyses N-terminal S-1,2-diacyl-sn-glyceryl-L-cysteinyl-[lipoprotein] + a glycerophospholipid = N-acyl-S-1,2-diacyl-sn-glyceryl-L-cysteinyl-[lipoprotein] + a 2-acyl-sn-glycero-3-phospholipid + H(+). The protein operates within protein modification; lipoprotein biosynthesis (N-acyl transfer). Its function is as follows. Catalyzes the phospholipid dependent N-acylation of the N-terminal cysteine of apolipoprotein, the last step in lipoprotein maturation. The polypeptide is Apolipoprotein N-acyltransferase (Pseudomonas aeruginosa (strain ATCC 15692 / DSM 22644 / CIP 104116 / JCM 14847 / LMG 12228 / 1C / PRS 101 / PAO1)).